The primary structure comprises 107 residues: Thioredoxin 1 (107 aa).

The Thioredoxin domain maps to 2–107; that stretch reads SVAAAVTDAT…TLANTLDKHL (106 aa). Cysteines 32 and 35 form a disulfide.

It belongs to the thioredoxin family.

Participates in various redox reactions through the reversible oxidation of its active center dithiol to a disulfide and catalyzes dithiol-disulfide exchange reactions. In Synechococcus elongatus (strain ATCC 33912 / PCC 7942 / FACHB-805) (Anacystis nidulans R2), this protein is Thioredoxin 1 (trxA).